The sequence spans 1188 residues: uncharacterized protein (1188 aa).

A run of 3 helical transmembrane segments spans residues 73-93 (FVVN…HLLM), 878-898 (IFSV…DSGI), and 1089-1109 (VIPL…SEFI).

The protein localises to the membrane. This is an uncharacterized protein from Saccharomyces cerevisiae (strain ATCC 204508 / S288c) (Baker's yeast).